The sequence spans 133 residues: Large ribosomal subunit protein bL12 (133 aa).

The disordered stretch occupies residues D98–D118.

This sequence belongs to the bacterial ribosomal protein bL12 family. Homodimer. Part of the ribosomal stalk of the 50S ribosomal subunit. Forms a multimeric L10(L12)X complex, where L10 forms an elongated spine to which 2 to 4 L12 dimers bind in a sequential fashion. Binds GTP-bound translation factors.

In terms of biological role, forms part of the ribosomal stalk which helps the ribosome interact with GTP-bound translation factors. Is thus essential for accurate translation. The polypeptide is Large ribosomal subunit protein bL12 (Crocosphaera subtropica (strain ATCC 51142 / BH68) (Cyanothece sp. (strain ATCC 51142))).